The primary structure comprises 308 residues: UDP-N-acetylenolpyruvoylglucosamine reductase (308 aa).

Residues glutamine 32–glycine 197 enclose the FAD-binding PCMH-type domain. Residue arginine 176 is part of the active site. Serine 226 acts as the Proton donor in catalysis. The active site involves glutamate 296.

The protein belongs to the MurB family. FAD is required as a cofactor.

Its subcellular location is the cytoplasm. The catalysed reaction is UDP-N-acetyl-alpha-D-muramate + NADP(+) = UDP-N-acetyl-3-O-(1-carboxyvinyl)-alpha-D-glucosamine + NADPH + H(+). Its pathway is cell wall biogenesis; peptidoglycan biosynthesis. Functionally, cell wall formation. The chain is UDP-N-acetylenolpyruvoylglucosamine reductase from Staphylococcus saprophyticus subsp. saprophyticus (strain ATCC 15305 / DSM 20229 / NCIMB 8711 / NCTC 7292 / S-41).